Reading from the N-terminus, the 414-residue chain is Serine hydroxymethyltransferase (414 aa).

(6S)-5,6,7,8-tetrahydrofolate-binding positions include leucine 116 and 120–122; that span reads GHL. Position 224 is an N6-(pyridoxal phosphate)lysine (lysine 224). Residues glutamate 240 and 348-350 contribute to the (6S)-5,6,7,8-tetrahydrofolate site; that span reads SPF.

Belongs to the SHMT family. Homodimer. Requires pyridoxal 5'-phosphate as cofactor.

The protein resides in the cytoplasm. The enzyme catalyses (6R)-5,10-methylene-5,6,7,8-tetrahydrofolate + glycine + H2O = (6S)-5,6,7,8-tetrahydrofolate + L-serine. It functions in the pathway one-carbon metabolism; tetrahydrofolate interconversion. Its pathway is amino-acid biosynthesis; glycine biosynthesis; glycine from L-serine: step 1/1. Its function is as follows. Catalyzes the reversible interconversion of serine and glycine with tetrahydrofolate (THF) serving as the one-carbon carrier. This reaction serves as the major source of one-carbon groups required for the biosynthesis of purines, thymidylate, methionine, and other important biomolecules. Also exhibits THF-independent aldolase activity toward beta-hydroxyamino acids, producing glycine and aldehydes, via a retro-aldol mechanism. The chain is Serine hydroxymethyltransferase from Campylobacter jejuni (strain RM1221).